The sequence spans 465 residues: UDP-N-acetylmuramate--L-alanine ligase (465 aa).

Glycine 112–threonine 118 contacts ATP.

Belongs to the MurCDEF family.

It is found in the cytoplasm. The enzyme catalyses UDP-N-acetyl-alpha-D-muramate + L-alanine + ATP = UDP-N-acetyl-alpha-D-muramoyl-L-alanine + ADP + phosphate + H(+). The protein operates within cell wall biogenesis; peptidoglycan biosynthesis. Its function is as follows. Cell wall formation. The protein is UDP-N-acetylmuramate--L-alanine ligase of Burkholderia thailandensis (strain ATCC 700388 / DSM 13276 / CCUG 48851 / CIP 106301 / E264).